Here is a 301-residue protein sequence, read N- to C-terminus: Cardiolipin synthase (CMP-forming) (301 aa).

The tract at residues S70–Q93 is disordered. Positions G71 to Q93 are enriched in low complexity. Transmembrane regions (helical) follow at residues I109–I129, F133–I153, I190–V212, L250–L270, and I272–G292.

This sequence belongs to the CDP-alcohol phosphatidyltransferase class-I family. It depends on a divalent metal cation as a cofactor. As to expression, highly expressed in tissues such as heart, skeletal muscle and liver.

Its subcellular location is the mitochondrion inner membrane. It catalyses the reaction a CDP-1,2-diacyl-sn-glycerol + a 1,2-diacyl-sn-glycero-3-phospho-(1'-sn-glycerol) = a cardiolipin + CMP + H(+). Catalyzes the synthesis of cardiolipin (CL) (diphosphatidylglycerol) by specifically transferring a phosphatidyl group from CDP-diacylglycerol to phosphatidylglycerol (PG). CL is a key phospholipid in mitochondrial membranes and plays important roles in maintaining the functional integrity and dynamics of mitochondria under both optimal and stress conditions. The polypeptide is Cardiolipin synthase (CMP-forming) (CRLS1) (Homo sapiens (Human)).